The chain runs to 638 residues: MRSTYKTIGLWVILIVLFVAFYNFFSQGNDQVQEPSFTQLLTKVEEKKVQEVAVKGNTYSGKFTDTSEKFRTTGPAPDAAMLNQLRSNGVDVKYEREEQNSLWLTILGQWMPVVFLFLFFIFFMRQLQGGSGKAMTFGKSKAKLLSESHNKVTFADVAGADECKEELEEIVAFLKDPKKFTKLGGRIPKGVLMMGSPGTGKTLLARAVAGEAGVPFFSISGSDFVEMFVGVGASRVRDLFEQGKKNAPCIIFIDEIDAVGRHRGAGLGGGHDEREQTLNQLLVEMDGFESNDGVILIAATNRPDVLDPALQRPGRFDRRIVVPRPDVKGRLGVLKVHTRRVPLAPEVDLEVIARGTPGMTGADLENLVNESALMAARQNKERVDLSDFEAAKDKVFMGPERRSMIMTEKEKKNTAVHEAGHALLAKLLPGCDPLHKVTIIPRGQALGVTWSLPTEDKVNGYKKQMLDQISMAMGGRIAEELMFNEMSSGAANDIERATETARAMVCRWGMSEKMGPLAFGKSDGEVFLGRDFNSSKDYSEDTARQIDAEVRNIVVGCYERGKNLLTENIEALRRVSDALVEYETLDAEDVNILLQGGQLTRERPPPRVNAPPKATEKKDKRKILDALEGLPAMEPKKA.

The Cytoplasmic portion of the chain corresponds to 1-7; sequence MRSTYKT. The chain crosses the membrane as a helical span at residues 8 to 28; the sequence is IGLWVILIVLFVAFYNFFSQG. Residues 29–102 lie on the Periplasmic side of the membrane; the sequence is NDQVQEPSFT…KYEREEQNSL (74 aa). Residues 103–123 traverse the membrane as a helical segment; sequence WLTILGQWMPVVFLFLFFIFF. At 124 to 638 the chain is on the cytoplasmic side; it reads MRQLQGGSGK…GLPAMEPKKA (515 aa). Residue 195-202 participates in ATP binding; sequence GSPGTGKT. His417 is a Zn(2+) binding site. Residue Glu418 is part of the active site. Positions 421 and 493 each coordinate Zn(2+). A disordered region spans residues 596–638; it reads GGQLTRERPPPRVNAPPKATEKKDKRKILDALEGLPAMEPKKA. The span at 614 to 625 shows a compositional bias: basic and acidic residues; that stretch reads ATEKKDKRKILD.

The protein in the central section; belongs to the AAA ATPase family. In the C-terminal section; belongs to the peptidase M41 family. Homohexamer. Zn(2+) is required as a cofactor.

The protein localises to the cell inner membrane. Acts as a processive, ATP-dependent zinc metallopeptidase for both cytoplasmic and membrane proteins. Plays a role in the quality control of integral membrane proteins. In Myxococcus xanthus (strain DK1622), this protein is ATP-dependent zinc metalloprotease FtsH.